A 238-amino-acid chain; its full sequence is ATP synthase subunit a (238 aa).

The next 5 membrane-spanning stretches (helical) occupy residues 18 to 38 (LTILAMSLLTITIIFILVFWA), 75 to 95 (YSLLMFILFSFVFIANNLGLM), 112 to 132 (NFGVDITLSLLVAFICHIEGI), 179 to 199 (VVTGLLLQLAVLSPFTGPLAF), and 203 to 223 (IVWTAFSMFIGFIQAYVFIIL).

Belongs to the ATPase A chain family. In terms of assembly, F-type ATPases have 2 components, CF(1) - the catalytic core - and CF(0) - the membrane proton channel. CF(1) has five subunits: alpha(3), beta(3), gamma(1), delta(1), epsilon(1). CF(0) has three main subunits: a(1), b(2) and c(9-12). The alpha and beta chains form an alternating ring which encloses part of the gamma chain. CF(1) is attached to CF(0) by a central stalk formed by the gamma and epsilon chains, while a peripheral stalk is formed by the delta and b chains.

It is found in the cell membrane. Key component of the proton channel; it plays a direct role in the translocation of protons across the membrane. The sequence is that of ATP synthase subunit a from Streptococcus agalactiae serotype Ia (strain ATCC 27591 / A909 / CDC SS700).